Here is a 555-residue protein sequence, read N- to C-terminus: WRKY transcription factor WRKY24 (555 aa).

2 disordered regions span residues 38-65 (GGGG…PSSF) and 132-248 (QTAP…CTFP). Positions 51–61 (PSLPLSPPPVS) are enriched in pro residues. The segment covering 163-194 (QQQQQPWGYQQQPAGMDAGANAASFGAAPFQA) has biased composition (low complexity). Residues 214 to 278 (SQRRSSDDGY…YKGTHNHAKP (65 aa)) constitute a DNA-binding region (WRKY 1). The Nuclear localization signal motif lies at 253-259 (KKKVERS). The interval 270 to 367 (KGTHNHAKPQ…EGISMAGNRT (98 aa)) is disordered. 2 stretches are compositionally biased toward polar residues: residues 277-294 (KPQN…QVLQ) and 310-320 (TAATPENSSAS). The segment covering 347-356 (DSKRWRKDGD) has biased composition (basic and acidic residues). The WRKY 2 DNA-binding region spans 379–444 (SDIDILDDGY…YEGKHNHDVP (66 aa)). The tract at residues 466-555 (HPYLPNQPPP…DDMFFQNSLY (90 aa)) is transcription repression of gibberellic acid (GA)-induced promoters. 2 disordered regions span residues 471-498 (NQPP…GQGP) and 513-555 (GFDD…NSLY).

The protein belongs to the WRKY group II-a family. Expressed in aleurone cells. Mostly expressed in aleurone layers and leaves, and, to a lower extent, in roots, panicles and embryos.

The protein resides in the nucleus. Functionally, transcription repressor. Interacts specifically with the W box (5'-(T)TGAC[CT]-3'), a frequently occurring elicitor-responsive cis-acting element. Negative regulator of both gibberellic acid (GA) and abscisic acid (ABA) signaling in aleurone cells, probably by interfering with GAM1, via the specific repression of GA- and ABA-induced promoters. The protein is WRKY transcription factor WRKY24 of Oryza sativa subsp. indica (Rice).